The primary structure comprises 302 residues: Rab effector Noc2 (302 aa).

One can recognise a RabBD domain in the interval 41–158 (QRRTQCLSPG…KRSGAWFYKG (118 aa)). The FYVE-type zinc finger occupies 89-146 (GNGVSQCLLCGEMLGFLGSSSVFCKDCRKKVCTKCGIEASPGQKRPLWLCKICSEQRE). Residues cysteine 95, cysteine 98, cysteine 112, cysteine 115, cysteine 120, cysteine 123, cysteine 138, and cysteine 141 each coordinate Zn(2+). 2 disordered regions span residues 174–194 (DPHF…SAEV) and 206–302 (VSSD…TTHY). At serine 248 the chain carries Phosphoserine. Positions 258–269 (SHLSGSQSSLGS) are enriched in low complexity.

In terms of assembly, recruited to dense-core vesicles through specific interaction with RAB27A in endocrine cells. Interacts with RAB3A, RAB3B, RAB3C and RAB3D. Interacts with ZYX. In terms of tissue distribution, highly expressed in pancreatic islets and parotid. High to moderate expression in adrenal gland, pituitary gland and ovary.

It localises to the cytoplasm. The protein localises to the cytoplasmic vesicle. The protein resides in the secretory vesicle membrane. Functionally, rab GTPase effector involved in the late steps of regulated exocytosis, both in endocrine and exocrine cells. Regulates the exocytosis of dense-core vesicles in neuroendocrine cells through interaction with RAB27A. Acts as a potential RAB3B effector protein in epithelial cells. The protein is Rab effector Noc2 (Rph3al) of Rattus norvegicus (Rat).